We begin with the raw amino-acid sequence, 184 residues long: ATP synthase subunit b, chloroplastic (184 aa).

The chain crosses the membrane as a helical span at residues 27–49; sequence LATNLINLSVVLGVLIFFGKGVL.

It belongs to the ATPase B chain family. As to quaternary structure, F-type ATPases have 2 components, F(1) - the catalytic core - and F(0) - the membrane proton channel. F(1) has five subunits: alpha(3), beta(3), gamma(1), delta(1), epsilon(1). F(0) has four main subunits: a(1), b(1), b'(1) and c(10-14). The alpha and beta chains form an alternating ring which encloses part of the gamma chain. F(1) is attached to F(0) by a central stalk formed by the gamma and epsilon chains, while a peripheral stalk is formed by the delta, b and b' chains.

The protein localises to the plastid. It localises to the chloroplast thylakoid membrane. Functionally, f(1)F(0) ATP synthase produces ATP from ADP in the presence of a proton or sodium gradient. F-type ATPases consist of two structural domains, F(1) containing the extramembraneous catalytic core and F(0) containing the membrane proton channel, linked together by a central stalk and a peripheral stalk. During catalysis, ATP synthesis in the catalytic domain of F(1) is coupled via a rotary mechanism of the central stalk subunits to proton translocation. Component of the F(0) channel, it forms part of the peripheral stalk, linking F(1) to F(0). The polypeptide is ATP synthase subunit b, chloroplastic (Liriodendron tulipifera (Tuliptree)).